Consider the following 305-residue polypeptide: tRNA dimethylallyltransferase (305 aa).

11–18 provides a ligand contact to ATP; sequence GPTAVGKT. A substrate-binding site is contributed by 13-18; the sequence is TAVGKT. Residues 36 to 39 form an interaction with substrate tRNA region; sequence DSMQ.

Belongs to the IPP transferase family. As to quaternary structure, monomer. Mg(2+) serves as cofactor.

It catalyses the reaction adenosine(37) in tRNA + dimethylallyl diphosphate = N(6)-dimethylallyladenosine(37) in tRNA + diphosphate. Functionally, catalyzes the transfer of a dimethylallyl group onto the adenine at position 37 in tRNAs that read codons beginning with uridine, leading to the formation of N6-(dimethylallyl)adenosine (i(6)A). This chain is tRNA dimethylallyltransferase, found in Listeria monocytogenes serotype 4b (strain CLIP80459).